We begin with the raw amino-acid sequence, 315 residues long: uncharacterized protein (315 aa).

Helical transmembrane passes span 18–38 (IWFI…IISG), 202–222 (ILAI…LAGI), and 244–264 (LIYA…VIVL). The tract at residues 288 to 315 (VCSTGNRSSGSTDQDISTTKQQSQEAVA) is disordered.

Its subcellular location is the membrane. This is an uncharacterized protein from Saccharomyces cerevisiae (strain ATCC 204508 / S288c) (Baker's yeast).